Here is a 232-residue protein sequence, read N- to C-terminus: Phosphoribosylformylglycinamidine synthase subunit PurQ (232 aa).

In terms of domain architecture, Glutamine amidotransferase type-1 spans 2-232 (KIAIIQFGGT…SMADYITENF (231 aa)). The active-site Nucleophile is C86. Residues H203 and E205 contribute to the active site.

As to quaternary structure, part of the FGAM synthase complex composed of 1 PurL, 1 PurQ and 2 PurS subunits.

The protein resides in the cytoplasm. It catalyses the reaction N(2)-formyl-N(1)-(5-phospho-beta-D-ribosyl)glycinamide + L-glutamine + ATP + H2O = 2-formamido-N(1)-(5-O-phospho-beta-D-ribosyl)acetamidine + L-glutamate + ADP + phosphate + H(+). It carries out the reaction L-glutamine + H2O = L-glutamate + NH4(+). It participates in purine metabolism; IMP biosynthesis via de novo pathway; 5-amino-1-(5-phospho-D-ribosyl)imidazole from N(2)-formyl-N(1)-(5-phospho-D-ribosyl)glycinamide: step 1/2. Its function is as follows. Part of the phosphoribosylformylglycinamidine synthase complex involved in the purines biosynthetic pathway. Catalyzes the ATP-dependent conversion of formylglycinamide ribonucleotide (FGAR) and glutamine to yield formylglycinamidine ribonucleotide (FGAM) and glutamate. The FGAM synthase complex is composed of three subunits. PurQ produces an ammonia molecule by converting glutamine to glutamate. PurL transfers the ammonia molecule to FGAR to form FGAM in an ATP-dependent manner. PurS interacts with PurQ and PurL and is thought to assist in the transfer of the ammonia molecule from PurQ to PurL. The chain is Phosphoribosylformylglycinamidine synthase subunit PurQ from Methanosarcina acetivorans (strain ATCC 35395 / DSM 2834 / JCM 12185 / C2A).